The primary structure comprises 547 residues: ATP synthase subunit alpha (547 aa).

Residue 172-179 (GDRKTGKT) participates in ATP binding.

It belongs to the ATPase alpha/beta chains family. F-type ATPases have 2 components, CF(1) - the catalytic core - and CF(0) - the membrane proton channel. CF(1) has five subunits: alpha(3), beta(3), gamma(1), delta(1), epsilon(1). CF(0) has three main subunits: a(1), b(2) and c(9-12). The alpha and beta chains form an alternating ring which encloses part of the gamma chain. CF(1) is attached to CF(0) by a central stalk formed by the gamma and epsilon chains, while a peripheral stalk is formed by the delta and b chains.

The protein localises to the cell membrane. It carries out the reaction ATP + H2O + 4 H(+)(in) = ADP + phosphate + 5 H(+)(out). Functionally, produces ATP from ADP in the presence of a proton gradient across the membrane. The alpha chain is a regulatory subunit. The protein is ATP synthase subunit alpha of Corynebacterium glutamicum (strain R).